A 180-amino-acid chain; its full sequence is Oligoribonuclease (180 aa).

Residues 7-170 form the Exonuclease domain; that stretch reads LIWIDLEMTG…DDIRDSINEL (164 aa). The active site involves Tyr128.

This sequence belongs to the oligoribonuclease family.

It is found in the cytoplasm. 3'-to-5' exoribonuclease specific for small oligoribonucleotides. The chain is Oligoribonuclease from Marinobacter nauticus (strain ATCC 700491 / DSM 11845 / VT8) (Marinobacter aquaeolei).